We begin with the raw amino-acid sequence, 510 residues long: MDEFQRYGNKHKSWQQCFLYPLFFREDLYTIAHDLYLDKSSSSEPTELSISNFFSFPTVKRLIRRIRQQNDSNSIGLFRNCDPNRFINRNRNSYSELVLEGLTVILEVSLAMQSKHFIEGMDGWKSIRSIHCIFTLMEDKFPYSNYVSDIRVPYSIHPEILVRTFRRWIRDAPSLHLLRSILHEWRNSFSAENLQKALVPPRENRRFSLFLWNSYVYECESFLVSLLKQFYHSRSLLYGSFPDRTHFDKKIKHIVIFPVKISTKRIWLLKYPFIYYVRYGERSLIALKGTHLQVKRCRYHLFNFWQYYFHLWSQPYRVCILELSKIYFYFLGHFLSFKMKTLVVRTKMLDDLLISDIIANEFNPIAPIRSILLYLTKERFCDISGQPISRLSWTNLSDDDILDRFDRMCRNIFHYYSGSINKDGLYYIKYILLLPCAKTLACKHKSTIRVVREESGSELFTKSFSKEREFIYSSFSKTCSQRERNWNSDIIQINILVNYWQKIHNKQIEK.

It belongs to the intron maturase 2 family. MatK subfamily.

The protein localises to the plastid. Its subcellular location is the chloroplast. Functionally, usually encoded in the trnK tRNA gene intron. Probably assists in splicing its own and other chloroplast group II introns. This is Maturase K from Taxus cuspidata (Japanese yew).